We begin with the raw amino-acid sequence, 193 residues long: Shikimate kinase (193 aa).

31 to 36 lines the ATP pocket; sequence GVGKTT. Residue threonine 35 participates in Mg(2+) binding. Positions 53, 77, and 103 each coordinate substrate. ATP is bound at residue arginine 141. Arginine 160 lines the substrate pocket. An ATP-binding site is contributed by glutamine 176.

Belongs to the shikimate kinase family. In terms of assembly, monomer. Mg(2+) is required as a cofactor.

It localises to the cytoplasm. The catalysed reaction is shikimate + ATP = 3-phosphoshikimate + ADP + H(+). It functions in the pathway metabolic intermediate biosynthesis; chorismate biosynthesis; chorismate from D-erythrose 4-phosphate and phosphoenolpyruvate: step 5/7. Catalyzes the specific phosphorylation of the 3-hydroxyl group of shikimic acid using ATP as a cosubstrate. This chain is Shikimate kinase, found in Novosphingobium aromaticivorans (strain ATCC 700278 / DSM 12444 / CCUG 56034 / CIP 105152 / NBRC 16084 / F199).